A 172-amino-acid chain; its full sequence is Myosin regulatory light chain 12B (172 aa).

Positions 1-16 (MSSKKAKTKTTKKRPQ) are enriched in basic residues. Residues 1–20 (MSSKKAKTKTTKKRPQRATS) form a disordered region. Thr-19 bears the Phosphothreonine; by MLCK and ZIPK/DAPK3 mark. The residue at position 20 (Ser-20) is a Phosphoserine; by MLCK and ZIPK/DAPK3. 3 EF-hand domains span residues 29–64 (SQIQ…LGKN), 98–133 (DPED…MGDR), and 134–169 (FTDE…GAKD). Ca(2+) contacts are provided by Asp-42, Asn-44, Asp-46, and Asp-53.

In terms of assembly, myosin is a hexamer of 2 heavy chains and 4 light chains: interacts with myosin heavy chain MYO19. In terms of processing, phosphorylation increases the actin-activated myosin ATPase activity and thereby regulates the contractile activity. It is required to generate the driving force in the migration of the cells but not necessary for localization of myosin-2 at the leading edge. Phosphorylation is reduced following epigallocatechin-3-O-gallate treatment.

In terms of biological role, myosin regulatory subunit that plays an important role in regulation of both smooth muscle and nonmuscle cell contractile activity via its phosphorylation. Phosphorylation triggers actin polymerization in vascular smooth muscle. Implicated in cytokinesis, receptor capping, and cell locomotion. This Rattus norvegicus (Rat) protein is Myosin regulatory light chain 12B (Myl12b).